Reading from the N-terminus, the 430-residue chain is Long-chain specific acyl-CoA dehydrogenase, mitochondrial (430 aa).

Residues 1–30 constitute a mitochondrion transit peptide; that stretch reads MAARLLLRSLRVLSARSATLPPPSARCSHS. N6-acetyllysine is present on K42. Phosphoserine is present on residues S54 and S55. K66 and K81 each carry N6-acetyllysine; alternate. N6-succinyllysine; alternate is present on residues K66 and K81. N6-acetyllysine is present on residues K92 and K95. An N6-succinyllysine modification is found at K165. 170 to 179 contacts FAD; the sequence is IAMTEPGAGS. S179 provides a ligand contact to substrate. S191 bears the Phosphoserine mark. 203 to 205 provides a ligand contact to FAD; it reads FIT. 227-228 lines the substrate pocket; sequence AH. The residue at position 240 (K240) is an N6-succinyllysine. N6-acetyllysine; alternate occurs at positions 254 and 279. An N6-succinyllysine; alternate mark is found at K254 and K279. Residues Y282 and 289 to 292 each bind substrate; that span reads PQER. The active-site Proton acceptor is the E291. R317 is a binding site for FAD. Position 318 is an N6-acetyllysine (K318). K322 is subject to N6-acetyllysine; alternate. An N6-succinyllysine; alternate modification is found at K322. An FAD-binding site is contributed by Q328. K358 is modified (N6-acetyllysine). At S362 the chain carries Phosphoserine. 385–389 serves as a coordination point for FAD; it reads QLHGG. Substrate is bound at residue 412–413; it reads GG. Position 414 to 416 (414 to 416) interacts with FAD; it reads TNE.

The protein belongs to the acyl-CoA dehydrogenase family. In terms of assembly, homotetramer. FAD serves as cofactor. Acetylation at Lys-318 and Lys-322 in proximity of the cofactor-binding sites strongly reduces catalytic activity. These sites are deacetylated by SIRT3.

It localises to the mitochondrion matrix. It carries out the reaction a long-chain 2,3-saturated fatty acyl-CoA + oxidized [electron-transfer flavoprotein] + H(+) = a long-chain (2E)-enoyl-CoA + reduced [electron-transfer flavoprotein]. The catalysed reaction is octanoyl-CoA + oxidized [electron-transfer flavoprotein] + H(+) = (2E)-octenoyl-CoA + reduced [electron-transfer flavoprotein]. It catalyses the reaction decanoyl-CoA + oxidized [electron-transfer flavoprotein] + H(+) = (2E)-decenoyl-CoA + reduced [electron-transfer flavoprotein]. The enzyme catalyses dodecanoyl-CoA + oxidized [electron-transfer flavoprotein] + H(+) = (2E)-dodecenoyl-CoA + reduced [electron-transfer flavoprotein]. It carries out the reaction tetradecanoyl-CoA + oxidized [electron-transfer flavoprotein] + H(+) = (2E)-tetradecenoyl-CoA + reduced [electron-transfer flavoprotein]. The catalysed reaction is oxidized [electron-transfer flavoprotein] + hexadecanoyl-CoA + H(+) = (2E)-hexadecenoyl-CoA + reduced [electron-transfer flavoprotein]. It catalyses the reaction octadecanoyl-CoA + oxidized [electron-transfer flavoprotein] + H(+) = (2E)-octadecenoyl-CoA + reduced [electron-transfer flavoprotein]. The enzyme catalyses (5E)-tetradecenoyl-CoA + oxidized [electron-transfer flavoprotein] + H(+) = (2E,5E)-tetradecadienoyl-CoA + reduced [electron-transfer flavoprotein]. It carries out the reaction (5Z)-tetradecenoyl-CoA + oxidized [electron-transfer flavoprotein] + H(+) = (2E,5Z)-tetradecadienoyl-CoA + reduced [electron-transfer flavoprotein]. The catalysed reaction is oxidized [electron-transfer flavoprotein] + (9Z)-octadecenoyl-CoA + H(+) = (2E,9Z)-octadecadienoyl-CoA + reduced [electron-transfer flavoprotein]. It catalyses the reaction hexanoyl-CoA + oxidized [electron-transfer flavoprotein] + H(+) = (2E)-hexenoyl-CoA + reduced [electron-transfer flavoprotein]. The enzyme catalyses eicosanoyl-CoA + oxidized [electron-transfer flavoprotein] + H(+) = (2E)-eicosenoyl-CoA + reduced [electron-transfer flavoprotein]. It carries out the reaction docosanoyl-CoA + oxidized [electron-transfer flavoprotein] + H(+) = (2E)-docosenoyl-CoA + reduced [electron-transfer flavoprotein]. The catalysed reaction is tetracosanoyl-CoA + oxidized [electron-transfer flavoprotein] + H(+) = (2E)-tetracosenoyl-CoA + reduced [electron-transfer flavoprotein]. It functions in the pathway lipid metabolism; mitochondrial fatty acid beta-oxidation. Its activity is regulated as follows. Inhibited by crotonyl-CoA, 2-octenoyl-CoA and 2-hexadecenoyl-CoA. Long-chain specific acyl-CoA dehydrogenase is one of the acyl-CoA dehydrogenases that catalyze the first step of mitochondrial fatty acid beta-oxidation, an aerobic process breaking down fatty acids into acetyl-CoA and allowing the production of energy from fats. The first step of fatty acid beta-oxidation consists in the removal of one hydrogen from C-2 and C-3 of the straight-chain fatty acyl-CoA thioester, resulting in the formation of trans-2-enoyl-CoA. Among the different mitochondrial acyl-CoA dehydrogenases, long-chain specific acyl-CoA dehydrogenase can act on saturated and unsaturated acyl-CoAs with 6 to 24 carbons with a preference for 8 to 18 carbons long primary chains. This chain is Long-chain specific acyl-CoA dehydrogenase, mitochondrial, found in Rattus norvegicus (Rat).